The chain runs to 365 residues: uncharacterized protein (365 aa).

Disordered stretches follow at residues 218-262 (QRPS…AEAA) and 315-342 (PRLP…RTPC). Basic and acidic residues-rich tracts occupy residues 239 to 257 (PDNR…KDPE) and 331 to 341 (MEFRNLSDRTP).

This is an uncharacterized protein from Mus musculus (Mouse).